Here is a 534-residue protein sequence, read N- to C-terminus: Phosphoenolpyruvate carboxykinase (ATP) (534 aa).

Substrate is bound by residues arginine 59, tyrosine 200, and lysine 206. Residues lysine 206, histidine 225, and 242 to 250 (GLSGTGKTT) each bind ATP. Lysine 206 and histidine 225 together coordinate Mn(2+). Aspartate 263 contributes to the Mn(2+) binding site. Residues glutamate 291, arginine 327, 443-444 (RI), and threonine 449 each bind ATP. Residue arginine 327 participates in substrate binding.

This sequence belongs to the phosphoenolpyruvate carboxykinase (ATP) family. Mn(2+) serves as cofactor.

The protein localises to the cytoplasm. It carries out the reaction oxaloacetate + ATP = phosphoenolpyruvate + ADP + CO2. Its pathway is carbohydrate biosynthesis; gluconeogenesis. Its function is as follows. Involved in the gluconeogenesis. Catalyzes the conversion of oxaloacetate (OAA) to phosphoenolpyruvate (PEP) through direct phosphoryl transfer between the nucleoside triphosphate and OAA. The polypeptide is Phosphoenolpyruvate carboxykinase (ATP) (Lachnospira eligens (strain ATCC 27750 / DSM 3376 / VPI C15-48 / C15-B4) (Eubacterium eligens)).